Consider the following 69-residue polypeptide: Large ribosomal subunit protein bL28 (69 aa).

The protein belongs to the bacterial ribosomal protein bL28 family.

The protein is Large ribosomal subunit protein bL28 of Lawsonia intracellularis (strain PHE/MN1-00).